We begin with the raw amino-acid sequence, 282 residues long: Bifunctional protein FolD (282 aa).

Residues G162–S164, S187, and V228 each bind NADP(+).

This sequence belongs to the tetrahydrofolate dehydrogenase/cyclohydrolase family. In terms of assembly, homodimer.

The catalysed reaction is (6R)-5,10-methylene-5,6,7,8-tetrahydrofolate + NADP(+) = (6R)-5,10-methenyltetrahydrofolate + NADPH. It carries out the reaction (6R)-5,10-methenyltetrahydrofolate + H2O = (6R)-10-formyltetrahydrofolate + H(+). It participates in one-carbon metabolism; tetrahydrofolate interconversion. In terms of biological role, catalyzes the oxidation of 5,10-methylenetetrahydrofolate to 5,10-methenyltetrahydrofolate and then the hydrolysis of 5,10-methenyltetrahydrofolate to 10-formyltetrahydrofolate. The polypeptide is Bifunctional protein FolD (Thermus thermophilus (strain ATCC BAA-163 / DSM 7039 / HB27)).